A 74-amino-acid chain; its full sequence is Translational regulator CsrA (74 aa).

This sequence belongs to the CsrA/RsmA family. Homodimer; the beta-strands of each monomer intercalate to form a hydrophobic core, while the alpha-helices form wings that extend away from the core.

It is found in the cytoplasm. A translational regulator that binds mRNA to regulate translation initiation and/or mRNA stability. Usually binds in the 5'-UTR at or near the Shine-Dalgarno sequence preventing ribosome-binding, thus repressing translation. Its main target seems to be the major flagellin gene, while its function is anatagonized by FliW. This is Translational regulator CsrA from Oceanobacillus iheyensis (strain DSM 14371 / CIP 107618 / JCM 11309 / KCTC 3954 / HTE831).